Here is a 393-residue protein sequence, read N- to C-terminus: NAD(P)H-quinone oxidoreductase subunit H, chloroplastic (393 aa).

This sequence belongs to the complex I 49 kDa subunit family. NDH is composed of at least 16 different subunits, 5 of which are encoded in the nucleus.

It is found in the plastid. Its subcellular location is the chloroplast thylakoid membrane. It catalyses the reaction a plastoquinone + NADH + (n+1) H(+)(in) = a plastoquinol + NAD(+) + n H(+)(out). The enzyme catalyses a plastoquinone + NADPH + (n+1) H(+)(in) = a plastoquinol + NADP(+) + n H(+)(out). In terms of biological role, NDH shuttles electrons from NAD(P)H:plastoquinone, via FMN and iron-sulfur (Fe-S) centers, to quinones in the photosynthetic chain and possibly in a chloroplast respiratory chain. The immediate electron acceptor for the enzyme in this species is believed to be plastoquinone. Couples the redox reaction to proton translocation, and thus conserves the redox energy in a proton gradient. The polypeptide is NAD(P)H-quinone oxidoreductase subunit H, chloroplastic (Oenothera argillicola (Appalachian evening primrose)).